The primary structure comprises 304 residues: Coenzyme PQQ synthesis protein B (304 aa).

It belongs to the PqqB family.

It functions in the pathway cofactor biosynthesis; pyrroloquinoline quinone biosynthesis. Functionally, may be involved in the transport of PQQ or its precursor to the periplasm. The polypeptide is Coenzyme PQQ synthesis protein B (Azoarcus sp. (strain BH72)).